The chain runs to 32 residues: Cytochrome b6-f complex subunit 7 (32 aa).

A helical membrane pass occupies residues 5–25 (IFGTAAIFWVLIPAGLLGGAL).

The protein belongs to the PetM family. In terms of assembly, the 4 large subunits of the cytochrome b6-f complex are cytochrome b6, subunit IV (17 kDa polypeptide, PetD), cytochrome f and the Rieske protein, while the 4 small subunits are PetG, PetL, PetM and PetN. The complex functions as a dimer.

The protein resides in the cellular thylakoid membrane. Its function is as follows. Component of the cytochrome b6-f complex, which mediates electron transfer between photosystem II (PSII) and photosystem I (PSI), cyclic electron flow around PSI, and state transitions. The sequence is that of Cytochrome b6-f complex subunit 7 from Prochlorococcus marinus (strain SARG / CCMP1375 / SS120).